The chain runs to 916 residues: MLTNIAKKIFGSRNDRLLKQYRKSVARINALEEQMQALSDADLQAKTAEFKQRLADGQTLDGILPEAFAVCREASRRTLGMRHFDVQLIGGMVLHDGKIAEMRTGEGKTLVATLAVYLNALAGKGVHVVTVNDYLASRDAGIMEPLYNFLGLTVGVIISDMQPFDRQNAYAADITYGTNNEFGFDYLRDNMVTDQYDKVQRELNFAVVDEVDSILIDEARTPLIISGQADDNIQLYQIMNTVPPHLVRQETEEGEGDYWVDEKAHQVILSEAGHEHAEQILTQMGLLAENDSLYSAANIALMHHLMAALRAHSLFHKDQHYVIQDGEIVIVDEFTGRLMSGRRWSEGLHQAVEAKEGVEIKRENQTLASITFQNYFRLYTKLSGMTGTADTEAFEFQSIYNLETVIIPTNRPVQRKDFNDQIFRSAEEKFEAVVKDIEECHKRGQPVLVGTTSIENSELVSHLLQKAGLPHNVLNAKEHEREALIVAQAGKVGAITVATNMAGRGTDIVLGGNLKHQTDAIRADETLSDEEKQAQIAALEDGWQAEHDKVMEAGGLHIIGTERHESRRIDNQLRGRSGRQGDPGSSRFYLSFEDPLLRLFALDRAAAILNRLAPERGVAIEHNLLTRQIEGAQRKVEGRNFDMRKQVLEYDDVANEQRKVIYSQRNEILTSKDISDLMQEIRSDVVSDLVDTYMPPDSMEEQWDIPTLENRLAAEFRLHEDIQSWLKADNAIDGQDIKERLIERIENEYAAKTELVGKQAMADFERNVMLQVIDNQWREHLAAMDYLRQGIHLRSYAQKNPKQEYKREAFTMFQDLWNGIKFHIASLLTSVQIEQNPVAVVEEQPIGNIQSIHSESPDMEELLGQSQTDLVTEAFNPDGTDFSPEALEARGQIVHRNDPCPCGSGLKYKQCHGKLA.

ATP is bound by residues Gln-87, 105–109 (GEGKT), and Asp-507. The Zn(2+) site is built by Cys-900, Cys-902, Cys-911, and His-912.

The protein belongs to the SecA family. In terms of assembly, monomer and homodimer. Part of the essential Sec protein translocation apparatus which comprises SecA, SecYEG and auxiliary proteins SecDF-YajC and YidC. It depends on Zn(2+) as a cofactor.

It localises to the cell inner membrane. The protein resides in the cytoplasm. It carries out the reaction ATP + H2O + cellular proteinSide 1 = ADP + phosphate + cellular proteinSide 2.. Functionally, part of the Sec protein translocase complex. Interacts with the SecYEG preprotein conducting channel. Has a central role in coupling the hydrolysis of ATP to the transfer of proteins into and across the cell membrane, serving both as a receptor for the preprotein-SecB complex and as an ATP-driven molecular motor driving the stepwise translocation of polypeptide chains across the membrane. The sequence is that of Protein translocase subunit SecA from Neisseria meningitidis serogroup C / serotype 2a (strain ATCC 700532 / DSM 15464 / FAM18).